Reading from the N-terminus, the 286-residue chain is Shikimate dehydrogenase (NADP(+)) (286 aa).

Shikimate-binding positions include 22–24 and threonine 71; that span reads SRS. The Proton acceptor role is filled by lysine 75. Glutamate 87 serves as a coordination point for NADP(+). 2 residues coordinate shikimate: asparagine 96 and aspartate 111. Residues 136–140, 160–165, and isoleucine 225 contribute to the NADP(+) site; these read GAGGA and NRTPER. Tyrosine 227 provides a ligand contact to shikimate. Position 248 (glycine 248) interacts with NADP(+).

This sequence belongs to the shikimate dehydrogenase family. As to quaternary structure, homodimer.

It catalyses the reaction shikimate + NADP(+) = 3-dehydroshikimate + NADPH + H(+). Its pathway is metabolic intermediate biosynthesis; chorismate biosynthesis; chorismate from D-erythrose 4-phosphate and phosphoenolpyruvate: step 4/7. In terms of biological role, involved in the biosynthesis of the chorismate, which leads to the biosynthesis of aromatic amino acids. Catalyzes the reversible NADPH linked reduction of 3-dehydroshikimate (DHSA) to yield shikimate (SA). The chain is Shikimate dehydrogenase (NADP(+)) from Rhizobium meliloti (strain 1021) (Ensifer meliloti).